The chain runs to 189 residues: Large ribosomal subunit protein bL9 (189 aa).

It belongs to the bacterial ribosomal protein bL9 family.

Functionally, binds to the 23S rRNA. This Methylobacterium nodulans (strain LMG 21967 / CNCM I-2342 / ORS 2060) protein is Large ribosomal subunit protein bL9.